We begin with the raw amino-acid sequence, 40 residues long: Photosystem II reaction center protein T (40 aa).

The helical transmembrane segment at 3 to 23 threads the bilayer; it reads ALVYTFLLVGTLGIIFFAIFF.

This sequence belongs to the PsbT family. PSII is composed of 1 copy each of membrane proteins PsbA, PsbB, PsbC, PsbD, PsbE, PsbF, PsbH, PsbI, PsbJ, PsbK, PsbL, PsbM, PsbT, PsbY, PsbZ, Psb30/Ycf12, at least 3 peripheral proteins of the oxygen-evolving complex and a large number of cofactors. It forms dimeric complexes.

It localises to the plastid. Its subcellular location is the chloroplast thylakoid membrane. Its function is as follows. Found at the monomer-monomer interface of the photosystem II (PS II) dimer, plays a role in assembly and dimerization of PSII. PSII is a light-driven water plastoquinone oxidoreductase, using light energy to abstract electrons from H(2)O, generating a proton gradient subsequently used for ATP formation. This chain is Photosystem II reaction center protein T, found in Anthoceros angustus (Hornwort).